We begin with the raw amino-acid sequence, 185 residues long: Ribosome-recycling factor (185 aa).

It belongs to the RRF family.

The protein localises to the cytoplasm. Functionally, responsible for the release of ribosomes from messenger RNA at the termination of protein biosynthesis. May increase the efficiency of translation by recycling ribosomes from one round of translation to another. This Pseudomonas putida (strain ATCC 700007 / DSM 6899 / JCM 31910 / BCRC 17059 / LMG 24140 / F1) protein is Ribosome-recycling factor.